The primary structure comprises 341 residues: S-adenosylmethionine:tRNA ribosyltransferase-isomerase (341 aa).

This sequence belongs to the QueA family. In terms of assembly, monomer.

It is found in the cytoplasm. The enzyme catalyses 7-aminomethyl-7-carbaguanosine(34) in tRNA + S-adenosyl-L-methionine = epoxyqueuosine(34) in tRNA + adenine + L-methionine + 2 H(+). Its pathway is tRNA modification; tRNA-queuosine biosynthesis. In terms of biological role, transfers and isomerizes the ribose moiety from AdoMet to the 7-aminomethyl group of 7-deazaguanine (preQ1-tRNA) to give epoxyqueuosine (oQ-tRNA). This Clostridium perfringens (strain ATCC 13124 / DSM 756 / JCM 1290 / NCIMB 6125 / NCTC 8237 / Type A) protein is S-adenosylmethionine:tRNA ribosyltransferase-isomerase.